Consider the following 201-residue polypeptide: Probable cytokinin riboside 5'-monophosphate phosphoribohydrolase LOG6 (201 aa).

Residues Glu89, 107 to 108, 124 to 130, and Thr136 contribute to the substrate site; these read RK and GYGTLEE.

The protein belongs to the LOG family.

It catalyses the reaction N(6)-(dimethylallyl)adenosine 5'-phosphate + H2O = N(6)-dimethylallyladenine + D-ribose 5-phosphate. The enzyme catalyses 9-ribosyl-trans-zeatin 5'-phosphate + H2O = trans-zeatin + D-ribose 5-phosphate. Cytokinin-activating enzyme working in the direct activation pathway. Phosphoribohydrolase that converts inactive cytokinin nucleotides to the biologically active free-base forms. The sequence is that of Probable cytokinin riboside 5'-monophosphate phosphoribohydrolase LOG6 (LOG6) from Arabidopsis thaliana (Mouse-ear cress).